Consider the following 174-residue polypeptide: Crossover junction endodeoxyribonuclease RuvC (174 aa).

Residues D8, E69, and D141 contribute to the active site. Mg(2+) contacts are provided by D8, E69, and D141.

Belongs to the RuvC family. As to quaternary structure, homodimer which binds Holliday junction (HJ) DNA. The HJ becomes 2-fold symmetrical on binding to RuvC with unstacked arms; it has a different conformation from HJ DNA in complex with RuvA. In the full resolvosome a probable DNA-RuvA(4)-RuvB(12)-RuvC(2) complex forms which resolves the HJ. Mg(2+) is required as a cofactor.

Its subcellular location is the cytoplasm. The enzyme catalyses Endonucleolytic cleavage at a junction such as a reciprocal single-stranded crossover between two homologous DNA duplexes (Holliday junction).. In terms of biological role, the RuvA-RuvB-RuvC complex processes Holliday junction (HJ) DNA during genetic recombination and DNA repair. Endonuclease that resolves HJ intermediates. Cleaves cruciform DNA by making single-stranded nicks across the HJ at symmetrical positions within the homologous arms, yielding a 5'-phosphate and a 3'-hydroxyl group; requires a central core of homology in the junction. The consensus cleavage sequence is 5'-(A/T)TT(C/G)-3'. Cleavage occurs on the 3'-side of the TT dinucleotide at the point of strand exchange. HJ branch migration catalyzed by RuvA-RuvB allows RuvC to scan DNA until it finds its consensus sequence, where it cleaves and resolves the cruciform DNA. This Xanthomonas oryzae pv. oryzae (strain PXO99A) protein is Crossover junction endodeoxyribonuclease RuvC.